Reading from the N-terminus, the 593-residue chain is Aspartate--tRNA ligase (593 aa).

Glu-180 contacts L-aspartate. Positions Gln-204–Lys-207 are aspartate. Residue Arg-226 coordinates L-aspartate. Residues Arg-226–Glu-228 and Gln-235 contribute to the ATP site. His-453 provides a ligand contact to L-aspartate. Glu-487 lines the ATP pocket. Residue Arg-494 coordinates L-aspartate. Gly-539–Arg-542 contributes to the ATP binding site.

It belongs to the class-II aminoacyl-tRNA synthetase family. Type 1 subfamily. As to quaternary structure, homodimer.

The protein resides in the cytoplasm. The catalysed reaction is tRNA(Asp) + L-aspartate + ATP = L-aspartyl-tRNA(Asp) + AMP + diphosphate. Functionally, catalyzes the attachment of L-aspartate to tRNA(Asp) in a two-step reaction: L-aspartate is first activated by ATP to form Asp-AMP and then transferred to the acceptor end of tRNA(Asp). This chain is Aspartate--tRNA ligase, found in Clostridium botulinum (strain Loch Maree / Type A3).